Reading from the N-terminus, the 1806-residue chain is uncharacterized protein (1806 aa).

2 disordered regions span residues 38 to 131 (EASG…SPLF) and 158 to 282 (KAVS…KPRP). A compositionally biased stretch (low complexity) spans 51 to 70 (KSPLRSPARLLPLPRLAPKP). Phosphoserine is present on residues Ser-52, Ser-56, Ser-79, Ser-87, Ser-88, Ser-92, and Ser-128. Positions 82–100 (PSLRPSSTGPSPSGGLSEE) are enriched in low complexity. The segment covering 226–236 (DTARPLVEPRP) has biased composition (basic and acidic residues). Phosphoserine occurs at positions 244 and 284. Disordered regions lie at residues 299–320 (RKVADEGSGPTAGDMAGLERPR), 355–431 (KEKM…GGEW), 456–604 (SESP…PEDD), and 627–696 (QSGR…ELRP). Ser-366 carries the phosphoserine modification. Thr-378 is modified (phosphothreonine). A Phosphoserine modification is found at Ser-384. Basic and acidic residues predominate over residues 386 to 400 (WEEKAKLDPEPEKAA). Residue Ser-404 is modified to Phosphoserine. Basic and acidic residues predominate over residues 412–422 (ELAEVKSRVAD). Low complexity predominate over residues 456 to 470 (SESPLATPASPSAAP). Phosphoserine is present on residues Ser-458 and Ser-508. A compositionally biased stretch (polar residues) spans 514-523 (LFSSSASSNE). Composition is skewed to basic and acidic residues over residues 524–549 (VKYEKSAELSGEFPKEPREKQKEGHS) and 564–573 (TLRDKSRQTE). A Phosphothreonine modification is found at Thr-600. Composition is skewed to basic and acidic residues over residues 641-652 (AHARVSEPRPRP) and 661-674 (DPPDMTKLKKENSR). A Phosphoserine modification is found at Ser-749. Disordered regions lie at residues 860 to 901 (QHEG…QART), 969 to 989 (SPHVGHRRTDYVSPTASALRK), and 1000 to 1019 (QEVNPGASRDQTSPAVKQGS). The segment covering 889–900 (RATNGPSDSQAR) has biased composition (polar residues). Residues Ser-969 and Ser-981 each carry the phosphoserine modification. Residues 969-978 (SPHVGHRRTD) show a composition bias toward basic and acidic residues. Phosphothreonine is present on Thr-1059. Ser-1063 and Ser-1154 each carry phosphoserine. The disordered stretch occupies residues 1134–1178 (RGSEDGPRPQSNWKESANKMSPSGGAPQTTPTLRSRPKDLPVRRK). Positions 1142–1166 (PQSNWKESANKMSPSGGAPQTTPTL) are enriched in polar residues. At Thr-1163 the chain carries Phosphothreonine. Over residues 1169–1178 (RPKDLPVRRK) the composition is skewed to basic and acidic residues. Thr-1179 and Thr-1185 each carry phosphothreonine. Disordered regions lie at residues 1216-1265 (PGEA…PASS) and 1291-1493 (KSSP…VASV). The residue at position 1224 (Ser-1224) is a Phosphoserine. Thr-1226 is modified (phosphothreonine). Basic and acidic residues-rich tracts occupy residues 1244–1254 (EQRRRSLKEMP) and 1317–1331 (DPRKKTGFAEDDRKA). Phosphoserine is present on Ser-1366. 2 stretches are compositionally biased toward basic and acidic residues: residues 1393–1410 (DHPRDCGRVPLDIKRAYS) and 1426–1437 (HEARERRREQPK). Ser-1441 is subject to Phosphoserine. Residues 1462 to 1483 (DSHKVLPRDLEKEDAPQEKERP) are compositionally biased toward basic and acidic residues. Residues Ser-1488 and Ser-1506 each carry the phosphoserine modification. Disordered regions lie at residues 1512–1627 (QLKQ…KRVD) and 1642–1806 (ALKT…ENQV). Positions 1522 to 1531 (TEPKDTDTLV) are enriched in basic and acidic residues. Residues 1537 to 1568 (QYGTWTEQCQSGESLATESPDSSATSTRKQPP) show a composition bias toward polar residues. Phosphoserine occurs at positions 1555 and 1662. Residues 1649-1666 (LSKRSRRRAPISHSLRRS) are compositionally biased toward basic residues. Basic and acidic residues-rich tracts occupy residues 1667–1677 (RFSESESRSPL) and 1689–1714 (DSTEEKSPRKEESDEEETASKAERTP). 4 positions are modified to phosphoserine: Ser-1701, Ser-1757, Ser-1760, and Ser-1786. Residues 1753-1764 (PQPKSPKSPFQP) show a composition bias toward low complexity.

This is an uncharacterized protein from Homo sapiens (Human).